Consider the following 333-residue polypeptide: Probable G-protein coupled receptor 33 (333 aa).

The Extracellular portion of the chain corresponds to 1-30 (MDLINSTDYLINASTLVRNSTQFLAPASKM). 3 N-linked (GlcNAc...) asparagine glycosylation sites follow: Asn-5, Asn-12, and Asn-19. Residues 31–53 (IIALSLYISSIIGTITNGLYLWV) traverse the membrane as a helical segment. Residues 54 to 64 (LRFKMKQTVNT) are Cytoplasmic-facing. Residues 65–86 (LLFFHLILSYFISTMILPFMAT) form a helical membrane-spanning segment. Residues 87 to 103 (SQLQDNHWNFGTALCKV) are Extracellular-facing. Cys-101 and Cys-179 form a disulfide bridge. A helical transmembrane segment spans residues 104 to 124 (FNGTLSLGMFTSVFFLSAIGL). The Cytoplasmic segment spans residues 125 to 143 (DRYLLTLHPVWSQQHRTPR). The chain crosses the membrane as a helical span at residues 144–165 (WASSIVLGVWISAAALSIPYLI). Residues 166–209 (FRQTHHDRKGKVTCQNNYAVSTNWESKEMQALRQWIHVACFISR) are Extracellular-facing. Residues 210–230 (FLLGFLLPFFIIIFCYERVAS) traverse the membrane as a helical segment. Residues 231–246 (KVKERSLFKSSKPFKV) lie on the Cytoplasmic side of the membrane. A helical transmembrane segment spans residues 247 to 268 (MMTAIISFFVCWMPYHIHQGLL). The Extracellular portion of the chain corresponds to 269–283 (LTMNQSLLLELTLIL). Asn-272 is a glycosylation site (N-linked (GlcNAc...) asparagine). The chain crosses the membrane as a helical span at residues 284–303 (TVLTTSFNTIFSPTLYLFVG). The Cytoplasmic segment spans residues 304–333 (ENFKKVFKKSILALFESTFSEDSSVERTQT).

The protein belongs to the G-protein coupled receptor 1 family.

It localises to the cell membrane. In terms of biological role, orphan receptor; could be a chemoattractant receptor. The chain is Probable G-protein coupled receptor 33 (GPR33) from Pan paniscus (Pygmy chimpanzee).